A 900-amino-acid chain; its full sequence is Endoglucanase H (900 aa).

Residues 1-44 (MKKRLLVSFLVLSIIVGLLSFQSLGNYNSGLKIGAWVGTQPSES) form the signal peptide. One can recognise a GH26 domain in the interval 45–298 (AIKSFQELQG…NSSPEALAAY (254 aa)). Glu-131 functions as the Proton donor in the catalytic mechanism. The active-site Nucleophile is the Glu-244. Positions 300 to 630 (EAIGAGSSNP…DTEILNALFN (331 aa)) are catalytic. Residues 303 to 326 (GAGSSNPTPTPTWTSTPPSSSPKA) form a disordered region. Over residues 306 to 324 (SSNPTPTPTWTSTPPSSSP) the composition is skewed to low complexity. Glu-460 acts as the Proton donor in catalysis. Glu-565 (nucleophile) is an active-site residue. One can recognise a CBM11 domain in the interval 655-900 (AVGEKMLDDF…LLKAISEIPI (246 aa)). Residues 827–900 (PSIKHGDLNF…LLKAISEIPI (74 aa)) enclose the Dockerin domain.

In the N-terminal section; belongs to the glycosyl hydrolase 5 (cellulase A) family. This sequence in the C-terminal section; belongs to the glycosyl hydrolase 26 family.

It catalyses the reaction Endohydrolysis of (1-&gt;4)-beta-D-glucosidic linkages in cellulose, lichenin and cereal beta-D-glucans.. Functionally, this enzyme catalyzes the endohydrolysis of 1,4-beta-glucosidic linkages in cellulose, lichenin and cereal beta-D-glucans. This is Endoglucanase H (celH) from Acetivibrio thermocellus (strain ATCC 27405 / DSM 1237 / JCM 9322 / NBRC 103400 / NCIMB 10682 / NRRL B-4536 / VPI 7372) (Clostridium thermocellum).